Here is a 1070-residue protein sequence, read N- to C-terminus: Carbamoyl phosphate synthase large chain (1070 aa).

Residues 1–399 (MPKREDIKKV…SLLKAFKSLD (399 aa)) are carboxyphosphate synthetic domain. ATP-binding residues include Arg129, Arg169, Gly175, Gly176, Glu208, Val210, Glu215, Gly241, Val242, His243, Gln284, and Glu296. The ATP-grasp 1 domain maps to 133 to 325 (KETMLRIGEK…IARVTAKIAI (193 aa)). Positions 284, 296, and 298 each coordinate Mg(2+). Mn(2+) contacts are provided by Gln284, Glu296, and Asn298. An oligomerization domain region spans residues 400-540 (IDSQLGNKRW…YSTYEDTCET (141 aa)). Residues 541–931 (NPTDRKKILI…YKAELAADNL (391 aa)) are carbamoyl phosphate synthetic domain. The region spanning 672–863 (YVLMQKFGIL…LAKIAARVIA (192 aa)) is the ATP-grasp 2 domain. Residues Arg708, Asp747, Leu749, Glu754, Gly779, Val780, His781, Ser782, Gln822, and Glu834 each coordinate ATP. Mg(2+) contacts are provided by Gln822, Glu834, and Asn836. Residues Gln822, Glu834, and Asn836 each coordinate Mn(2+). The 141-residue stretch at 930 to 1070 (NLLPLTGKVF…INEYHKEMGL (141 aa)) folds into the MGS-like domain. The segment at 932-1070 (LPLTGKVFLS…INEYHKEMGL (139 aa)) is allosteric domain.

The protein belongs to the CarB family. As to quaternary structure, composed of two chains; the small (or glutamine) chain promotes the hydrolysis of glutamine to ammonia, which is used by the large (or ammonia) chain to synthesize carbamoyl phosphate. Tetramer of heterodimers (alpha,beta)4. Mg(2+) is required as a cofactor. Mn(2+) serves as cofactor.

It catalyses the reaction hydrogencarbonate + L-glutamine + 2 ATP + H2O = carbamoyl phosphate + L-glutamate + 2 ADP + phosphate + 2 H(+). The catalysed reaction is hydrogencarbonate + NH4(+) + 2 ATP = carbamoyl phosphate + 2 ADP + phosphate + 2 H(+). The protein operates within amino-acid biosynthesis; L-arginine biosynthesis; carbamoyl phosphate from bicarbonate: step 1/1. Its pathway is pyrimidine metabolism; UMP biosynthesis via de novo pathway; (S)-dihydroorotate from bicarbonate: step 1/3. Its function is as follows. Large subunit of the glutamine-dependent carbamoyl phosphate synthetase (CPSase). CPSase catalyzes the formation of carbamoyl phosphate from the ammonia moiety of glutamine, carbonate, and phosphate donated by ATP, constituting the first step of 2 biosynthetic pathways, one leading to arginine and/or urea and the other to pyrimidine nucleotides. The large subunit (synthetase) binds the substrates ammonia (free or transferred from glutamine from the small subunit), hydrogencarbonate and ATP and carries out an ATP-coupled ligase reaction, activating hydrogencarbonate by forming carboxy phosphate which reacts with ammonia to form carbamoyl phosphate. This is Carbamoyl phosphate synthase large chain from Methanosarcina acetivorans (strain ATCC 35395 / DSM 2834 / JCM 12185 / C2A).